Here is a 328-residue protein sequence, read N- to C-terminus: Endochitinase (328 aa).

Positions 1–26 (MRRHKEVNFVAYLLFSLLVLVSAALA) are cleaved as a signal peptide. In terms of domain architecture, Chitin-binding type-1 spans 27-68 (QNCGSQGGGKACASGQCCSKFGWCGNTNDYCGSGNCQSQCPG). 7 disulfides stabilise this stretch: cysteine 29–cysteine 44, cysteine 38–cysteine 50, cysteine 43–cysteine 57, cysteine 62–cysteine 66, cysteine 100–cysteine 162, cysteine 174–cysteine 182, and cysteine 281–cysteine 313. The active-site Proton donor is the glutamate 144. A propeptide spans 322–328 (ALLVDTL) (removed in mature form).

This sequence belongs to the glycosyl hydrolase 19 family. Chitinase class I subfamily.

Its subcellular location is the vacuole. It carries out the reaction Random endo-hydrolysis of N-acetyl-beta-D-glucosaminide (1-&gt;4)-beta-linkages in chitin and chitodextrins.. Its function is as follows. Defense against chitin-containing fungal pathogens. This Solanum tuberosum (Potato) protein is Endochitinase.